The chain runs to 578 residues: Forkhead box protein P1 (578 aa).

The C2H2-type zinc finger occupies 208 to 233 (GVCKWPGCETICEDFPSFLKHLNSEH). The segment at 250–271 (VQQLELQLSKDKERLQAMMSHL) is leucine-zipper. The tract at residues 284–288 (PLNLV) is ctbp1-binding. Polar residues predominate over residues 293–305 (LSKTASEASPQSL). The disordered stretch occupies residues 293–325 (LSKTASEASPQSLPHTPTTPTAPLTPITQGPSV). The segment covering 306–320 (PHTPTTPTAPLTPIT) has biased composition (low complexity). Positions 366–456 (RPPFTYASLI…PQKISGSPTL (91 aa)) form a DNA-binding region, fork-head. The segment at 511–578 (MEHTSSNGSD…EDDPVNDDME (68 aa)) is disordered. Low complexity predominate over residues 515 to 527 (SSNGSDSSPGRSP). The segment covering 568-578 (YEDDPVNDDME) has biased composition (acidic residues).

Dimerization is required for DNA-binding. Isoform a, but not isoform b, interacts with ctbp1. As to expression, all isoforms show similar spatial expression. Localized to the animal hemisphere of early cleavage stage embryos. At tailbud stages, expressed in regions of the brain, eye and the splanchnic mesodermal layer of the lateral plate mesoderm surrounding the gut. At stage 35, expressed within the lens of the eye, in distinct regions of the head mesenchyme and in the area anterior to the gut. In the brain the anterior-most expression is restricted to the outer region of the mesencephalon. With ongoing development, additional expression is found in the curling gut.

The protein localises to the nucleus. Its function is as follows. Transcriptional repressor. The chain is Forkhead box protein P1 from Xenopus laevis (African clawed frog).